The following is a 519-amino-acid chain: Cytochrome P450 72C1 (519 aa).

Residues valine 10 to valine 30 traverse the membrane as a helical segment. Cysteine 467 contacts heme.

The protein belongs to the cytochrome P450 family. Requires heme as cofactor. As to expression, expressed in hypocotyls, roots, cotyledons, stamens and silique junctions.

It is found in the membrane. Its function is as follows. Atypical cytochrome P450 involved in brassinosteroids (BRs) inactivation and regulation of BRs homeostasis. Does not possess carbon 26 hydroxylase activity and may inactivate BRs by hydroxylation of carbons other than C-26. Acts in association with CYP734A1 to inactivate BRs and modulate photomorphogenesis. The chain is Cytochrome P450 72C1 (CYP72C1) from Arabidopsis thaliana (Mouse-ear cress).